A 187-amino-acid polypeptide reads, in one-letter code: Ribosome-recycling factor (187 aa).

Belongs to the RRF family.

The protein resides in the cytoplasm. Functionally, responsible for the release of ribosomes from messenger RNA at the termination of protein biosynthesis. May increase the efficiency of translation by recycling ribosomes from one round of translation to another. The polypeptide is Ribosome-recycling factor (Methylobacterium nodulans (strain LMG 21967 / CNCM I-2342 / ORS 2060)).